The following is a 416-amino-acid chain: Adenylosuccinate synthetase (416 aa).

GTP contacts are provided by residues 13–19 and 41–43; these read GDEGKGK and GHT. The active-site Proton acceptor is the D14. The Mg(2+) site is built by D14 and G41. IMP contacts are provided by residues 14-17, 39-42, T126, R140, Q220, T235, and R299; these read DEGK and NAGH. H42 (proton donor) is an active-site residue. Substrate is bound at residue 295-301; that stretch reads TTTGRKR. Residues R301, 327–329, and 405–407 contribute to the GTP site; these read KLD and STS.

Belongs to the adenylosuccinate synthetase family. In terms of assembly, homodimer. It depends on Mg(2+) as a cofactor.

It is found in the cytoplasm. The catalysed reaction is IMP + L-aspartate + GTP = N(6)-(1,2-dicarboxyethyl)-AMP + GDP + phosphate + 2 H(+). The protein operates within purine metabolism; AMP biosynthesis via de novo pathway; AMP from IMP: step 1/2. In terms of biological role, plays an important role in the de novo pathway of purine nucleotide biosynthesis. Catalyzes the first committed step in the biosynthesis of AMP from IMP. The polypeptide is Adenylosuccinate synthetase (Campylobacter hominis (strain ATCC BAA-381 / DSM 21671 / CCUG 45161 / LMG 19568 / NCTC 13146 / CH001A)).